The primary structure comprises 190 residues: Elongation factor P (190 aa).

It belongs to the elongation factor P family.

Its subcellular location is the cytoplasm. It participates in protein biosynthesis; polypeptide chain elongation. In terms of biological role, involved in peptide bond synthesis. Stimulates efficient translation and peptide-bond synthesis on native or reconstituted 70S ribosomes in vitro. Probably functions indirectly by altering the affinity of the ribosome for aminoacyl-tRNA, thus increasing their reactivity as acceptors for peptidyl transferase. The sequence is that of Elongation factor P from Amoebophilus asiaticus (strain 5a2).